The chain runs to 403 residues: Argininosuccinate synthase (403 aa).

ATP contacts are provided by residues 13-21 (AYSGGLDTS) and Ala-40. L-citrulline contacts are provided by Tyr-92 and Ser-97. Residue Gly-122 coordinates ATP. Thr-124, Asn-128, and Asp-129 together coordinate L-aspartate. Asn-128 contacts L-citrulline. Arg-132, Ser-181, Ser-190, Glu-266, and Tyr-278 together coordinate L-citrulline.

Belongs to the argininosuccinate synthase family. Type 1 subfamily. As to quaternary structure, homotetramer.

The protein resides in the cytoplasm. It catalyses the reaction L-citrulline + L-aspartate + ATP = 2-(N(omega)-L-arginino)succinate + AMP + diphosphate + H(+). The protein operates within amino-acid biosynthesis; L-arginine biosynthesis; L-arginine from L-ornithine and carbamoyl phosphate: step 2/3. In Aliivibrio salmonicida (strain LFI1238) (Vibrio salmonicida (strain LFI1238)), this protein is Argininosuccinate synthase.